We begin with the raw amino-acid sequence, 356 residues long: AT-hook motif nuclear-localized protein 1 (356 aa).

Positions Met-1–His-127 are disordered. The segment covering Val-49–Leu-66 has biased composition (pro residues). A compositionally biased stretch (basic residues) spans Met-88 to Lys-97. A Bipartite nuclear localization signal motif is present at residues Lys-89–Lys-97. The segment at residues Lys-89–Asp-101 is a DNA-binding region (a.T hook). A compositionally biased stretch (low complexity) spans Ala-106–Pro-118. The PPC domain maps to Gly-167–Thr-309. A required for nuclear localization region spans residues Gly-270–Ala-287. Residues Lys-295–Asp-302 carry the Nuclear localization signal motif.

The protein resides in the nucleus. Its subcellular location is the nucleoplasm. It localises to the chromosome. Transcription factor that specifically binds AT-rich DNA sequences related to the nuclear matrix attachment regions (MARs). May play a function in the positioning of chromatin fibers within the nucleus. The chain is AT-hook motif nuclear-localized protein 1 from Arabidopsis thaliana (Mouse-ear cress).